The primary structure comprises 201 residues: Casparian strip membrane protein 2 (201 aa).

Topologically, residues methionine 1–arginine 38 are cytoplasmic. Residues glycine 39–threonine 59 form a helical membrane-spanning segment. Residues threonine 60 to serine 89 are Extracellular-facing. The chain crosses the membrane as a helical span at residues phenylalanine 90–isoleucine 110. At valine 111–aspartate 129 the chain is on the cytoplasmic side. A helical transmembrane segment spans residues threonine 130 to alanine 150. Residues histidine 151–glycine 175 lie on the Extracellular side of the membrane. A helical transmembrane segment spans residues alanine 176 to phenylalanine 196. At serine 197–histidine 201 the chain is on the cytoplasmic side.

Belongs to the Casparian strip membrane proteins (CASP) family. As to quaternary structure, homodimer and heterodimers.

The protein resides in the cell membrane. Functionally, regulates membrane-cell wall junctions and localized cell wall deposition. Required for establishment of the Casparian strip membrane domain (CSD) and the subsequent formation of Casparian strips, a cell wall modification of the root endodermis that determines an apoplastic barrier between the intraorganismal apoplasm and the extraorganismal apoplasm and prevents lateral diffusion. This chain is Casparian strip membrane protein 2, found in Vitis vinifera (Grape).